The sequence spans 181 residues: dCTP deaminase (181 aa).

Residues 100–105 and D116 contribute to the dCTP site; that span reads RSTFAR. The active-site Proton donor/acceptor is E126. The dCTP site is built by Y158 and Q165. The segment at 160 to 181 is disordered; sequence GKYQGQRGVTPPKLDNSSSKNF.

This sequence belongs to the dCTP deaminase family. As to quaternary structure, homotrimer.

The enzyme catalyses dCTP + H2O + H(+) = dUTP + NH4(+). It functions in the pathway pyrimidine metabolism; dUMP biosynthesis; dUMP from dCTP (dUTP route): step 1/2. In terms of biological role, catalyzes the deamination of dCTP to dUTP. This chain is dCTP deaminase, found in Desulfurococcus amylolyticus (strain DSM 18924 / JCM 16383 / VKM B-2413 / 1221n) (Desulfurococcus kamchatkensis).